The primary structure comprises 580 residues: CDKN2A-interacting protein (580 aa).

Position 2 is an N-acetylalanine (alanine 2). Residues 19-133 enclose the XRN2-binding (XTBD) domain; that stretch reads VEALRCDGET…KVKKRGISSS (115 aa). The disordered stretch occupies residues 129–356; that stretch reads GISSSNEGVE…PKSSSSTNTS (228 aa). Serine 131 is modified (phosphoserine). Residues 155-167 are compositionally biased toward basic and acidic residues; the sequence is EQDHAKTSAKTER. Over residues 168–179 the composition is skewed to polar residues; the sequence is ASAQQENSSTCI. Lysine 184 is covalently cross-linked (Glycyl lysine isopeptide (Lys-Gly) (interchain with G-Cter in SUMO1)). Positions 185–228 are enriched in low complexity; sequence SESGNSARSSGISSQNSSTSDGDRSVSSQSSSSVSSQVTTAGSG. Residues 231-240 show a composition bias toward basic and acidic residues; the sequence is SEAEAPDKHG. Serine 241 is subject to Phosphoserine. The span at 248–269 shows a compositional bias: polar residues; that stretch reads LKSSVNSHMTQSTDSRQQSGSP. Composition is skewed to low complexity over residues 274–313 and 321–356; these read LEGS…PSSE and SKTS…TNTS. Threonine 346 is modified (phosphothreonine). Position 389 is a phosphoserine (serine 389). One can recognise a DRBM domain in the interval 462–537; that stretch reads NHGELLNAAI…SREALKLFLK (76 aa).

The protein belongs to the CARF family. As to quaternary structure, interacts with CDKN2A/p14ARF, p53/TP53 and MDM2. Interacts with CHEK2 and MAPK3. Interacts with XRN2. May be ubiquitinated. In terms of tissue distribution, ubiquitously expressed.

It localises to the nucleus. It is found in the nucleoplasm. Its function is as follows. Regulates DNA damage response in a dose-dependent manner through a number of signaling pathways involved in cell proliferation, apoptosis and senescence. This chain is CDKN2A-interacting protein (CDKN2AIP), found in Homo sapiens (Human).